Here is a 645-residue protein sequence, read N- to C-terminus: 1-deoxy-D-xylulose-5-phosphate synthase 1 (645 aa).

Thiamine diphosphate is bound by residues histidine 79 and 120–122 (GHS). A Mg(2+)-binding site is contributed by aspartate 151. Residues 152–153 (GS), asparagine 180, tyrosine 291, and glutamate 373 contribute to the thiamine diphosphate site. Position 180 (asparagine 180) interacts with Mg(2+).

It belongs to the transketolase family. DXPS subfamily. In terms of assembly, homodimer. The cofactor is Mg(2+). Thiamine diphosphate is required as a cofactor.

The enzyme catalyses D-glyceraldehyde 3-phosphate + pyruvate + H(+) = 1-deoxy-D-xylulose 5-phosphate + CO2. It functions in the pathway metabolic intermediate biosynthesis; 1-deoxy-D-xylulose 5-phosphate biosynthesis; 1-deoxy-D-xylulose 5-phosphate from D-glyceraldehyde 3-phosphate and pyruvate: step 1/1. Functionally, catalyzes the acyloin condensation reaction between C atoms 2 and 3 of pyruvate and glyceraldehyde 3-phosphate to yield 1-deoxy-D-xylulose-5-phosphate (DXP). The polypeptide is 1-deoxy-D-xylulose-5-phosphate synthase 1 (Rhodospirillum rubrum (strain ATCC 11170 / ATH 1.1.1 / DSM 467 / LMG 4362 / NCIMB 8255 / S1)).